Reading from the N-terminus, the 672-residue chain is DNA ligase (672 aa).

Residues Asp-32–Asp-36, Ser-81–Leu-82, and Glu-114 each bind NAD(+). Residue Lys-116 is the N6-AMP-lysine intermediate of the active site. The NAD(+) site is built by Arg-137, Glu-174, Lys-291, and Lys-315. 4 residues coordinate Zn(2+): Cys-409, Cys-412, Cys-427, and Cys-433. One can recognise a BRCT domain in the interval Val-592–Ser-672.

Belongs to the NAD-dependent DNA ligase family. LigA subfamily. Mg(2+) serves as cofactor. Requires Mn(2+) as cofactor.

The catalysed reaction is NAD(+) + (deoxyribonucleotide)n-3'-hydroxyl + 5'-phospho-(deoxyribonucleotide)m = (deoxyribonucleotide)n+m + AMP + beta-nicotinamide D-nucleotide.. DNA ligase that catalyzes the formation of phosphodiester linkages between 5'-phosphoryl and 3'-hydroxyl groups in double-stranded DNA using NAD as a coenzyme and as the energy source for the reaction. It is essential for DNA replication and repair of damaged DNA. This Actinobacillus succinogenes (strain ATCC 55618 / DSM 22257 / CCUG 43843 / 130Z) protein is DNA ligase.